The chain runs to 355 residues: Phosphoribosylformylglycinamidine cyclo-ligase (355 aa).

This sequence belongs to the AIR synthase family.

The protein resides in the cytoplasm. It catalyses the reaction 2-formamido-N(1)-(5-O-phospho-beta-D-ribosyl)acetamidine + ATP = 5-amino-1-(5-phospho-beta-D-ribosyl)imidazole + ADP + phosphate + H(+). It participates in purine metabolism; IMP biosynthesis via de novo pathway; 5-amino-1-(5-phospho-D-ribosyl)imidazole from N(2)-formyl-N(1)-(5-phospho-D-ribosyl)glycinamide: step 2/2. The sequence is that of Phosphoribosylformylglycinamidine cyclo-ligase from Hamiltonella defensa subsp. Acyrthosiphon pisum (strain 5AT).